Consider the following 518-residue polypeptide: Sensor protein kinase HptS (518 aa).

2 consecutive transmembrane segments (helical) span residues 20 to 40 (IFPV…IYIW) and 222 to 242 (GITL…FGFI). Positions 297–513 (EQLIHSIEHT…LICYKIPLSR (217 aa)) constitute a Histidine kinase domain. His-325 carries the phosphohistidine; by autocatalysis modification.

Post-translationally, autophosphorylated.

The protein localises to the cell membrane. It carries out the reaction ATP + protein L-histidine = ADP + protein N-phospho-L-histidine.. In terms of biological role, member of the two-component regulatory system HptS/HptR that regulates genes involved in hexose phosphate transport system in response to changes in extracellular phosphate sources. May act as a sensor protein kinase which is autophosphorylated at a histidine residue and transfers its phosphate group to the conserved aspartic acid residue in the regulatory domain of HptS. In turn, HptS antagonizes CcpA-dependent transcription of a subset of CcpA-regulated genes involved in antibiotic susceptibility. The protein is Sensor protein kinase HptS (hptS) of Staphylococcus aureus (strain Mu50 / ATCC 700699).